Reading from the N-terminus, the 166-residue chain is Interleukin-3 (166 aa).

A signal peptide spans 1 to 27 (MVLASSTTSILCMLLPLLMLFHQGLQI). 2 cysteine pairs are disulfide-bonded: C43-C106 and C105-C166. N-linked (GlcNAc...) asparagine glycans are attached at residues N60 and N70. Residues 145-166 (SVSRPPQPTSSSDNFRPMTVEC) form a disordered region.

It belongs to the IL-3 family. Monomer. As to expression, activated T-cells, mast cells, natural killer cells.

The protein resides in the secreted. Its function is as follows. Cytokine secreted predominantly by activated T-lymphocytes as well as mast cells and osteoblastic cells that controls the production and differentiation of hematopoietic progenitor cells into lineage-restricted cells. Also stimulates mature basophils, eosinophils, and monocytes to become functionally activated. In addition, plays an important role in neural cell proliferation and survival. Participates as well in bone homeostasis and inhibits osteoclast differentiation by preventing NF-kappa-B nuclear translocation and activation. Mechanistically, exerts its biological effects through a receptor composed of IL3RA subunit and a signal transducing subunit IL3RB. Receptor stimulation results in the rapid activation of JAK2 kinase activity leading to STAT5-mediated transcriptional program. Alternatively, contributes to cell survival under oxidative stress in non-hematopoietic systems by activating pathways mediated by PI3K/AKT and ERK. The chain is Interleukin-3 (Il3) from Rattus norvegicus (Rat).